The chain runs to 307 residues: Elongation factor Ts (307 aa).

An involved in Mg(2+) ion dislocation from EF-Tu region spans residues 79-82 (TDFV).

It belongs to the EF-Ts family.

The protein localises to the cytoplasm. Associates with the EF-Tu.GDP complex and induces the exchange of GDP to GTP. It remains bound to the aminoacyl-tRNA.EF-Tu.GTP complex up to the GTP hydrolysis stage on the ribosome. This Sinorhizobium fredii (strain NBRC 101917 / NGR234) protein is Elongation factor Ts.